A 204-amino-acid polypeptide reads, in one-letter code: Ribosomal RNA small subunit methyltransferase G (204 aa).

Residues G76, L81, 127 to 128 (IE), and R140 contribute to the S-adenosyl-L-methionine site.

Belongs to the methyltransferase superfamily. RNA methyltransferase RsmG family.

Its subcellular location is the cytoplasm. The catalysed reaction is guanosine(527) in 16S rRNA + S-adenosyl-L-methionine = N(7)-methylguanosine(527) in 16S rRNA + S-adenosyl-L-homocysteine. Its function is as follows. Specifically methylates the N7 position of guanine in position 527 of 16S rRNA. In Francisella philomiragia subsp. philomiragia (strain ATCC 25017 / CCUG 19701 / FSC 153 / O#319-036), this protein is Ribosomal RNA small subunit methyltransferase G.